We begin with the raw amino-acid sequence, 327 residues long: Small ribosomal subunit protein uS4m (327 aa).

Residues 96–154 (SRLDMSIHRALFASSALQARQLVLHGKVHVNGKPERRAYRQLLPGDLVTVDQKSVMNCV) enclose the S4 RNA-binding domain. A compositionally biased stretch (polar residues) spans 156–173 (ASSNNTPSIQDGKQTEQV). Residues 156–199 (ASSNNTPSIQDGKQTEQVSSKDGENEKKKDNDDDLFEQTSNGKL) form a disordered region. Positions 174–186 (SSKDGENEKKKDN) are enriched in basic and acidic residues.

This sequence belongs to the universal ribosomal protein uS4 family. Component of the mitochondrial small ribosomal subunit (mt-SSU). Mature yeast 74S mitochondrial ribosomes consist of a small (37S) and a large (54S) subunit. The 37S small subunit contains a 15S ribosomal RNA (15S mt-rRNA) and at least 32 different proteins. The 54S large subunit contains a 21S rRNA (21S mt-rRNA) and at least 45 different proteins. uS3m, uS4m and uS5m form the narrow entry site of the mRNA channel.

Its subcellular location is the mitochondrion. Component of the mitochondrial ribosome (mitoribosome), a dedicated translation machinery responsible for the synthesis of mitochondrial genome-encoded proteins, including at least some of the essential transmembrane subunits of the mitochondrial respiratory chain. The mitoribosomes are attached to the mitochondrial inner membrane and translation products are cotranslationally integrated into the membrane. The sequence is that of Small ribosomal subunit protein uS4m (nam9) from Schizosaccharomyces pombe (strain 972 / ATCC 24843) (Fission yeast).